The following is a 235-amino-acid chain: tRNA (guanine-N(1)-)-methyltransferase (235 aa).

S-adenosyl-L-methionine-binding positions include glycine 112 and 132 to 137 (IGDYVI).

Belongs to the RNA methyltransferase TrmD family. As to quaternary structure, homodimer.

The protein resides in the cytoplasm. It carries out the reaction guanosine(37) in tRNA + S-adenosyl-L-methionine = N(1)-methylguanosine(37) in tRNA + S-adenosyl-L-homocysteine + H(+). Specifically methylates guanosine-37 in various tRNAs. This is tRNA (guanine-N(1)-)-methyltransferase from Anaplasma marginale (strain Florida).